Consider the following 68-residue polypeptide: Venom peptide 3 (68 aa).

The N-terminal stretch at 1–25 (MTKQSIVIVLFAAIAMMACLQRVTA) is a signal peptide. AXPX repeat units follow at residues 25–28 (AEPA), 33–36 (AAPI), 37–40 (AEPY), 41–44 (ANPE), and 47–50 (ASPE). A propeptide spanning residues 26–51 (EPAPEPIAAPIAEPYANPEAIASPEA) is cleaved from the precursor. Position 65 is a leucine amide (leucine 65).

As to expression, expressed by the venom gland.

The protein resides in the secreted. The protein localises to the target cell membrane. Its function is as follows. Antimicrobial peptide with strong activity against the fungi B.cinerea (MIC=5 uM) and C.albicans (MIC=33 uM), and no activity against the Gram-negative bacterium E.coli (MIC&gt;200 uM) and the Gram-positive bacterium S.aureus (MIC&gt;200 uM). Shows cytolytic activity against insect cell lines. Has no hemolytic activity against human erythrocytes. In vivo, peptide injection in the vicinity of the head and thorax of lepidopteran larvae induces feeding disorder that lasts one or two days before recovering. The sequence is that of Venom peptide 3 from Orancistrocerus drewseni (Solitary wasp).